A 2465-amino-acid chain; its full sequence is Serine/threonine-protein kinase TOR (2465 aa).

HEAT repeat units lie at residues 184 to 221 (VHVPEFVDAIWVALRDPKQAVRERAVEALRACLHVIEK), 271 to 308 (SRYREVADIVLNYLRHRDQLVRRSITSLLPRIAHFLRD), 348 to 389 (AELV…AMGP), 549 to 587 (RLVEEIVEKLLMAAVADADVGVRSSVFKALYRNPSFDDF), 588 to 625 (LAQADIMTSIFVALNDEEYHVRELAISVAGRLSEKNPA), 717 to 755 (QYLPELMPLVVDALLDGGAVSKREVAVATLGQVIQSTGY), 761 to 799 (NEYPPLLGLLLKLLNGELEWSTRLEVLKVLGIMGALDPH), 888 to 926 (PYLPKVLPELFRAVRMCEDGGLKEFITWKLGTLVSIVRQ), 981 to 1018 (MYILHILPSCIQVLGDAERCNDYYYVPDILHTLEVFGG), 1022 to 1059 (EHMHLVAPVLVRLFKVELVDIRRRAIVTLTKLIPTVQV), and 1061 to 1098 (THVSVLVHHLKLVLDGNNDDLRKDAAEALCCLAHALGE). The tract at residues 1158–1191 (DFGGVPSEEADETQRQPRSHQVNDVRLRSAGEAS) is disordered. An FAT domain is found at 1297–1877 (LLGALAEKCR…MYPLLVACKS (581 aa)). The PI3K/PI4K catalytic domain occupies 2051 to 2369 (FVPQLIVITS…PPRGAREREL (319 aa)). Residues 2057–2063 (VITSKQR) form a G-loop region. Residues 2230–2238 (GLGDRHPSN) form a catalytic loop region. An activation loop region spans residues 2250-2275 (HIDFGDCFEASMNREKFPEKVPFRLT). The disordered stretch occupies residues 2401 to 2431 (RDFSSGSSLSGAGSSTQHGNEHLASGDTREV). Low complexity predominate over residues 2404–2415 (SSGSSLSGAGSS). Residues 2433 to 2465 (PGLSVKVQVQRLILQATSHENLCQNYVGWCPFW) form the FATC domain.

Belongs to the PI3/PI4-kinase family. In terms of assembly, the target of rapamycin complex 1 (TORC1) is composed of at least RAPTOR, LST8 and TOR.

The catalysed reaction is L-seryl-[protein] + ATP = O-phospho-L-seryl-[protein] + ADP + H(+). It catalyses the reaction L-threonyl-[protein] + ATP = O-phospho-L-threonyl-[protein] + ADP + H(+). Insensitive to inhibition by rapamycin. In terms of biological role, component of TORC1 complex, which is an essential cell growth regulator that controls plant development. Acts through the phosphorylation of downstream effectors that are recruited by the binding partner RAPTOR. Acts by activating transcription, protein synthesis and ribosome biogenesis, and inhibiting mRNA degradation and autophagy. The polypeptide is Serine/threonine-protein kinase TOR (Oryza sativa subsp. japonica (Rice)).